The chain runs to 377 residues: Multiple sugar-binding transport ATP-binding protein MsmK (377 aa).

An ABC transporter domain is found at 4–246 (LNLNHIYKKY…PANKFVAGFI (243 aa)). 38–45 (GPSGCGKS) contributes to the ATP binding site.

It belongs to the ABC transporter superfamily.

It localises to the cell membrane. Functionally, involved in a binding protein-dependent transport system responsible for the uptake of melibiose, raffinose and isomaltotriose. Probably responsible for energy coupling to the transport system. This Streptococcus mutans serotype c (strain ATCC 700610 / UA159) protein is Multiple sugar-binding transport ATP-binding protein MsmK (msmK).